A 267-amino-acid chain; its full sequence is Probable ribosomal RNA small subunit methyltransferase A (267 aa).

S-adenosyl-L-methionine contacts are provided by Leu12, Gly37, Glu58, Asp83, and Asn100.

The protein belongs to the class I-like SAM-binding methyltransferase superfamily. rRNA adenine N(6)-methyltransferase family. RsmA subfamily.

It localises to the cytoplasm. Specifically dimethylates two adjacent adenosines in the loop of a conserved hairpin near the 3'-end of 16S rRNA in the 30S particle. May play a critical role in biogenesis of 30S subunits. This is Probable ribosomal RNA small subunit methyltransferase A from Methanococcus vannielii (strain ATCC 35089 / DSM 1224 / JCM 13029 / OCM 148 / SB).